The following is a 220-amino-acid chain: Ribosomal RNA small subunit methyltransferase G (220 aa).

Residues Gly82, Leu87, 137 to 138 (VE), and Arg152 each bind S-adenosyl-L-methionine.

It belongs to the methyltransferase superfamily. RNA methyltransferase RsmG family.

It localises to the cytoplasm. The enzyme catalyses guanosine(527) in 16S rRNA + S-adenosyl-L-methionine = N(7)-methylguanosine(527) in 16S rRNA + S-adenosyl-L-homocysteine. Functionally, specifically methylates the N7 position of guanine in position 527 of 16S rRNA. The polypeptide is Ribosomal RNA small subunit methyltransferase G (Janthinobacterium sp. (strain Marseille) (Minibacterium massiliensis)).